A 179-amino-acid chain; its full sequence is DELTA-actitoxin-Afr1e (179 aa).

An N-terminal alpha-helix that contributes to the pore region spans residues serine 1–valine 29. The N-terminal region stretch occupies residues glycine 11–lysine 30. Residue arginine 31 participates in an N-(acyl)-sphingosylphosphocholine binding. N-acetyl-D-glucosamine 6-sulfate is bound by residues tyrosine 51 and arginine 53. Positions 53, 54, 79, 85, 108, 113, 114, 116, 133, 137, 138, 144, and 168 each coordinate an N-(acyl)-sphingosylphosphocholine. Positions serine 105 to arginine 120 are trp-rich region, which is important for the binding to lipid membrane. Tyrosine 138 lines the N-acetyl-D-glucosamine 6-sulfate pocket. Positions arginine 144–aspartate 146 match the Cell attachment site, crucial for protein stability motif.

It belongs to the actinoporin family. Sea anemone subfamily. As to quaternary structure, octamer or nonamer in membranes. Monomer in the soluble state.

It localises to the secreted. The protein resides in the nematocyst. It is found in the target cell membrane. Functionally, pore-forming toxin (PFT) that consists of a crown-shaped octamer or nonamer that forms cation-selective hydrophilic pores of about 1.5 nm (inside) and 13 nm (outside) and causes cytolysis. It causes cardiac stimulation. Also causes hemolysis (HC(50)=1.6 nM). Interestingly, the Phe-16 is crucial for hemolysis. Pore formation is a multi-step process that involves specific recognition of membrane sphingomyelin (but neither cholesterol nor phosphatidylcholine) using aromatic rich region and adjacent phosphocholine (POC) binding site, firm binding to the membrane (mainly driven by hydrophobic interactions) accompanied by the transfer of the N-terminal region to the lipid-water interface and finally pore formation after oligomerization of monomers. It is probable that a dimeric form is an assembly intermediate before the complete oligomerization. The formation of stable pores occurs only in vesicles composed of DOPC/SM (there is no oligomerization when the PFT is treated with vesicles of DOPC or SM alone). The transmembrane pore displays 8 lateral perforations, one at each subunit-subunit interface, partially occupied by the acyl-chain region of a bridging lipid. Each pore contains 24 lipid molecules, firmly bound to each subunit, that is, 3 lipids (L1, L2, L3, L4 and/or L5) are associated to each subunit. Lipid L1 bridges 2 subunits, whereas lipids L2 and L3 bind to sites at single subunit. The sequence is that of DELTA-actitoxin-Afr1e from Actinia fragacea (Strawberry anemone).